Reading from the N-terminus, the 123-residue chain is Transmembrane protein 049L (123 aa).

2 consecutive transmembrane segments (helical) span residues 67 to 87 and 104 to 121; these read VFGA…LWLV and LSLQ…GVYN.

The protein resides in the membrane. This Acheta domesticus (House cricket) protein is Transmembrane protein 049L.